The sequence spans 230 residues: Small ribosomal subunit protein uS2 (230 aa).

It belongs to the universal ribosomal protein uS2 family.

This chain is Small ribosomal subunit protein uS2, found in Prochlorococcus marinus (strain NATL2A).